The following is a 184-amino-acid chain: Nucleoside triphosphate pyrophosphatase (184 aa).

Catalysis depends on D66, which acts as the Proton acceptor.

The protein belongs to the Maf family. A divalent metal cation serves as cofactor.

It is found in the cytoplasm. It carries out the reaction a ribonucleoside 5'-triphosphate + H2O = a ribonucleoside 5'-phosphate + diphosphate + H(+). The catalysed reaction is a 2'-deoxyribonucleoside 5'-triphosphate + H2O = a 2'-deoxyribonucleoside 5'-phosphate + diphosphate + H(+). Nucleoside triphosphate pyrophosphatase. May have a dual role in cell division arrest and in preventing the incorporation of modified nucleotides into cellular nucleic acids. The sequence is that of Nucleoside triphosphate pyrophosphatase from Prochlorococcus marinus (strain MIT 9313).